The following is a 436-amino-acid chain: Glutamyl-tRNA reductase (436 aa).

Substrate is bound by residues 56–59, serine 114, 119–121, and glutamine 125; these read TCNR and EAQ. Cysteine 57 acts as the Nucleophile in catalysis. 194–199 lines the NADP(+) pocket; it reads GAGEMI.

This sequence belongs to the glutamyl-tRNA reductase family. In terms of assembly, homodimer.

It carries out the reaction (S)-4-amino-5-oxopentanoate + tRNA(Glu) + NADP(+) = L-glutamyl-tRNA(Glu) + NADPH + H(+). Its pathway is porphyrin-containing compound metabolism; protoporphyrin-IX biosynthesis; 5-aminolevulinate from L-glutamyl-tRNA(Glu): step 1/2. Functionally, catalyzes the NADPH-dependent reduction of glutamyl-tRNA(Glu) to glutamate 1-semialdehyde (GSA). This chain is Glutamyl-tRNA reductase, found in Acidovorax sp. (strain JS42).